We begin with the raw amino-acid sequence, 691 residues long: DNA ligase (691 aa).

NAD(+) contacts are provided by residues 41-45 (DAEYD), 90-91 (SL), and Glu130. Residue Lys132 is the N6-AMP-lysine intermediate of the active site. Residues Arg153, Glu190, Lys307, and Lys331 each contribute to the NAD(+) site. 4 residues coordinate Zn(2+): Cys425, Cys428, Cys443, and Cys449. One can recognise a BRCT domain in the interval 610–691 (APQGVLAGKT…LHQLLEGNTP (82 aa)).

The protein belongs to the NAD-dependent DNA ligase family. LigA subfamily. The cofactor is Mg(2+). It depends on Mn(2+) as a cofactor.

It catalyses the reaction NAD(+) + (deoxyribonucleotide)n-3'-hydroxyl + 5'-phospho-(deoxyribonucleotide)m = (deoxyribonucleotide)n+m + AMP + beta-nicotinamide D-nucleotide.. DNA ligase that catalyzes the formation of phosphodiester linkages between 5'-phosphoryl and 3'-hydroxyl groups in double-stranded DNA using NAD as a coenzyme and as the energy source for the reaction. It is essential for DNA replication and repair of damaged DNA. The sequence is that of DNA ligase from Burkholderia cenocepacia (strain ATCC BAA-245 / DSM 16553 / LMG 16656 / NCTC 13227 / J2315 / CF5610) (Burkholderia cepacia (strain J2315)).